Consider the following 169-residue polypeptide: Dihydrofolate reductase type 8 (169 aa).

The 167-residue stretch at 3–169 folds into the DHFR domain; that stretch reads ELHAILAATA…FTYRKKELTE (167 aa).

This sequence belongs to the dihydrofolate reductase family. In terms of assembly, homodimer.

It catalyses the reaction (6S)-5,6,7,8-tetrahydrofolate + NADP(+) = 7,8-dihydrofolate + NADPH + H(+). The protein operates within cofactor biosynthesis; tetrahydrofolate biosynthesis; 5,6,7,8-tetrahydrofolate from 7,8-dihydrofolate: step 1/1. In terms of biological role, key enzyme in folate metabolism. Catalyzes an essential reaction for de novo glycine and purine synthesis, and for DNA precursor synthesis. This is Dihydrofolate reductase type 8 (dhfrVIII) from Escherichia coli.